Here is a 1411-residue protein sequence, read N- to C-terminus: Regulating synaptic membrane exocytosis protein 2 (1411 aa).

Residues 1–33 (MSAPVGPRGRLAPIPAASQPPLQPEMPDLSHLT) are disordered. The region spanning 26 to 185 (MPDLSHLTEE…TKSGAWFYNS (160 aa)) is the RabBD domain. The FYVE-type zinc-finger motif lies at 117–173 (KGDAPTCGICHKTKFADGCGHNCSYCQTKFCARCGGRVSLRSNKVMWVCNLCRKQQE). Residues Cys123, Cys126, Cys139, Cys142, Cys147, Cys150, Cys165, and Cys168 each contribute to the Zn(2+) site. 6 stretches are compositionally biased toward basic and acidic residues: residues 203 to 216 (NEEA…KLHE), 273 to 287 (DQNR…REEY), 318 to 329 (DSDHLSYRDSNR), 348 to 366 (RDEY…RYRS), 382 to 401 (EQMR…RHSD), and 410 to 434 (EDSR…RRAA). Disordered regions lie at residues 203–598 (NEEA…SERQ) and 623–650 (SGVD…WQPS). Ser400 is modified (phosphoserine). Positions 451–463 (GPSSYAQRTTNHS) are enriched in polar residues. Residues 475–492 (DRPDLRRTDSLRKQHHLD) are compositionally biased toward basic and acidic residues. Over residues 510–521 (RNDSLSSDQSES) the composition is skewed to polar residues. A compositionally biased stretch (basic residues) spans 528 to 537 (KPHKSKKGGK). Over residues 558 to 568 (SCDDVEIESES) the composition is skewed to acidic residues. Basic and acidic residues-rich tracts occupy residues 569–583 (VSEK…RKTS) and 634–644 (NEEHSHSDKHP). In terms of domain architecture, PDZ spans 668–754 (DGSVPRDSGA…EPQVELVVSR (87 aa)). Thr689 bears the Phosphothreonine mark. Residues 762-793 (IPDSTHAQLESSSSSFESQKMDRPSISVTSPM) form a disordered region. A phosphoserine mark is found at Ser791 and Ser794. A C2 1 domain is found at 805–928 (LSGQLSIKLW…ALLDDEPHWY (124 aa)). 2 disordered regions span residues 939 to 973 (PLPH…SEVS) and 993 to 1190 (DLQS…STET). 2 stretches are compositionally biased toward polar residues: residues 994–1015 (LQSS…SPSG) and 1049–1059 (RTMTGHYNTIS). The segment covering 1060–1113 (RMDRHRVMDDHYSPDRDRDCEAADRQPYHRSRSTEQRPLLERTTTRSRSTERPD) has biased composition (basic and acidic residues). Residues 1143–1153 (GSVQTSPSSTP) are compositionally biased toward polar residues. A Phosphoserine modification is found at Ser1148. The C2 2 domain maps to 1257–1375 (AMGDIQVGMM…ELSNMVIGWF (119 aa)). 2 positions are modified to phosphoserine: Ser1396 and Ser1399.

As to quaternary structure, interacts with RAB3A and RAB3B that have been activated by GTP-binding. Interacts with RAB3C, RAB3D and RAB26. Interacts with TSPOAP1 and RIMBP2. Interacts with PPFIA3 and PPFIA4. Interacts via its zinc finger with the first C2 domain of UNC13A. Forms a complex consisting of UNC13A, RIMS2 and RAB3A. Heterodimer with PCLO. Part of a ternary complex involving PCLO and EPAC2. In terms of tissue distribution, widely expressed. Expressed in melanocytes. In fetal tissues, predominantly expressed in the brain. In the retina, expressed in the outer plexiform layer (at protein level). In the cerebellum, expressed in Purkinje cells (at protein level). In the pancreas, expressed in Langerhans islets (at protein level).

It is found in the cell membrane. It localises to the synapse. Its subcellular location is the presynaptic cell membrane. Functionally, rab effector involved in exocytosis. May act as scaffold protein. Plays a role in dendrite formation by melanocytes. This Homo sapiens (Human) protein is Regulating synaptic membrane exocytosis protein 2 (RIMS2).